The primary structure comprises 449 residues: Biotin carboxylase (449 aa).

The Biotin carboxylation domain occupies 4-448 (MIEKVLIANR…NIHYLEKMLG (445 aa)). Residues Lys119, Lys162, 168-169 (GG), 204-207 (EKYL), His212, and His239 contribute to the ATP site. The 198-residue stretch at 123-320 (IAAMKAAGVP…IVKEQILIAA (198 aa)) folds into the ATP-grasp domain. Lys241 contributes to the hydrogencarbonate binding site. Glu279 and Glu291 together coordinate ATP. Glu279, Glu291, and Asn293 together coordinate Mg(2+). Glu279, Glu291, and Asn293 together coordinate Mn(2+). Arg295, Val298, and Arg341 together coordinate hydrogencarbonate. The active site involves Arg295. Residue Arg341 coordinates biotin.

As to quaternary structure, acetyl-CoA carboxylase is a heterohexamer of biotin carboxyl carrier protein, biotin carboxylase and the two subunits of carboxyl transferase in a 2:2 complex. The cofactor is Mg(2+). Mn(2+) is required as a cofactor.

The catalysed reaction is N(6)-biotinyl-L-lysyl-[protein] + hydrogencarbonate + ATP = N(6)-carboxybiotinyl-L-lysyl-[protein] + ADP + phosphate + H(+). It functions in the pathway lipid metabolism; malonyl-CoA biosynthesis; malonyl-CoA from acetyl-CoA: step 1/1. Its function is as follows. This protein is a component of the acetyl coenzyme A carboxylase complex; first, biotin carboxylase catalyzes the carboxylation of the carrier protein and then the transcarboxylase transfers the carboxyl group to form malonyl-CoA. This chain is Biotin carboxylase (accC), found in Allochromatium vinosum (strain ATCC 17899 / DSM 180 / NBRC 103801 / NCIMB 10441 / D) (Chromatium vinosum).